The sequence spans 185 residues: dTDP-4-dehydrorhamnose 3,5-epimerase (185 aa).

Substrate contacts are provided by residues Arg23, Glu28, 47–49 (QDN), and Arg59. His62 acts as the Proton acceptor in catalysis. The substrate site is built by Lys72 and His119. Tyr132 (proton donor) is an active-site residue. The substrate site is built by Asp143 and Lys168.

The protein belongs to the dTDP-4-dehydrorhamnose 3,5-epimerase family. In terms of assembly, homodimer.

It catalyses the reaction dTDP-4-dehydro-6-deoxy-alpha-D-glucose = dTDP-4-dehydro-beta-L-rhamnose. It participates in carbohydrate biosynthesis; dTDP-L-rhamnose biosynthesis. Its pathway is bacterial outer membrane biogenesis; LPS O-antigen biosynthesis. Its function is as follows. Catalyzes the epimerization of the C3' and C5'positions of dTDP-6-deoxy-D-xylo-4-hexulose, forming dTDP-6-deoxy-L-lyxo-4-hexulose. This chain is dTDP-4-dehydrorhamnose 3,5-epimerase (rfbC), found in Escherichia coli (strain K12).